The following is a 237-amino-acid chain: Flagellar L-ring protein (237 aa).

The first 24 residues, 1-24 (MNRPGFPRFSVLIASLCGITLLSG), serve as a signal peptide directing secretion. A lipid anchor (N-palmitoyl cysteine) is attached at cysteine 25. Cysteine 25 carries S-diacylglycerol cysteine lipidation.

It belongs to the FlgH family. As to quaternary structure, the basal body constitutes a major portion of the flagellar organelle and consists of four rings (L,P,S, and M) mounted on a central rod.

It is found in the cell outer membrane. Its subcellular location is the bacterial flagellum basal body. Assembles around the rod to form the L-ring and probably protects the motor/basal body from shearing forces during rotation. This chain is Flagellar L-ring protein, found in Pseudomonas syringae pv. tomato (strain ATCC BAA-871 / DC3000).